An 809-amino-acid polypeptide reads, in one-letter code: Pentatricopeptide repeat-containing protein At1g11290, chloroplastic (809 aa).

The N-terminal 46 residues, 1 to 46, are a transit peptide targeting the chloroplast; it reads MSSQLVQFSTVPQIPNPPSRHRHFLSERNYIPANVYEHPAALLLER. PPR repeat units follow at residues 68-98, 99-133, 134-168, 169-199, 200-234, 235-269, 270-300, 301-335, 336-370, 371-401, 402-436, 437-471, 472-502, 503-537, 538-568, and 574-604; these read EHFFQTKLVSLFCRYGSVDEAARVFEPIDSK, LNVLYHTMLKGFAKVSDLDKALQFFVRMRYDDVEP, VVYNFTYLLKVCGDEAELRVGKEIHGLLVKSGFSL, DLFAMTGLENMYAKCRQVNEARKVFDRMPER, DLVSWNTIVAGYSQNGMARMALEMVKSMCEENLKP, SFITIVSVLPAVSALRLISVGKEIHGYAMRSGFDS, LVNISTALVDMYAKCGSLETARQLFDGMLER, NVVSWNSMIDAYVQNENPKEAMLIFQKMLDEGVKP, TDVSVMGALHACADLGDLERGRFIHKLSVELGLDR, NVSVVNSLISMYCKCKEVDTAASMFGKLQSR, TLVSWNAMILGFAQNGRPIDALNYFSQMRSRTVKP, DTFTYVSVITAIAELSITHHAKWIHGVVMRSCLDK, NVFVTTALVDMYAKCGAIMIARLIFDMMSER, HVTTWNAMIDGYGTHGFGKAALELFEEMQKGTIKP, NGVTFLSVISACSHSGLVEAGLKCFYMMKEN, and SMDHYGAMVDLLGRAGRLNEAWDFIMQMPVK. Residues 609-684 form a type E motif region; that stretch reads VYGAMLGACQ…TPGCSMVEIK (76 aa). The interval 685–715 is type E(+) motif; it reads NEVHSFFSGSTAHPDSKKIYAFLEKLICHIK. Residues 716–809 form a type DYW motif region; the sequence is EAGYVPDTNL…NGACSCGDYW (94 aa).

The protein belongs to the PPR family. PCMP-H subfamily.

The protein localises to the plastid. Its subcellular location is the chloroplast. In terms of biological role, involved in multiple sites RNA editing events in chloroplasts. Involved in the editing of the site 7 of ndhB (ndhB-7) and site 5 of ndhD (ndhD-5) transcripts, which are two plastid-encoded subunits of the chloroplast NAD(P)H dehydrogenase (NDH) complex. Involved in the editing of the site 3 of rpoB (rpoB-3) transcript. Required for the activity of the NDH complex of the photosynthetic electron transport chain. Possesses low endoribonuclease activity in vitro. This Arabidopsis thaliana (Mouse-ear cress) protein is Pentatricopeptide repeat-containing protein At1g11290, chloroplastic (PCMP-H40).